A 734-amino-acid chain; its full sequence is Photosystem I P700 chlorophyll a apoprotein A2 (734 aa).

Helical transmembrane passes span 46–69, 135–158, 175–199, 273–291, 330–353, 369–395, 417–439, and 517–535; these read IFASHFGQLAIIFLWTSGNLFHVA, LYTGALFLLFLSAISLIAGWLHLQ, LNHHLSGLFGVSSLAWTGHLVHVAI, MAHHHLAIAFIFLVAGHMY, LHFQLGLALASLGVITSLVAQHMY, AALYTHHQYIAGFIMTGAFAHGAIFFI, AIISHLSWASLFLGFHTLGLYVH, and FLVHHAIALGLHTTTLILV. [4Fe-4S] cluster-binding residues include C559 and C568. 2 helical membrane passes run 575 to 596 and 643 to 665; these read AFYLAVFWMLNTIGWVTFYWHW and LSVWAWMFLFGHLVWATGFMFLI. The chlorophyll a site is built by H654, M662, and Y670. A phylloquinone-binding site is contributed by W671. Residues 707–727 traverse the membrane as a helical segment; it reads LVGLAHFSVGYIFTYAAFLIA.

Belongs to the PsaA/PsaB family. In terms of assembly, the PsaA/B heterodimer binds the P700 chlorophyll special pair and subsequent electron acceptors. PSI consists of a core antenna complex that captures photons, and an electron transfer chain that converts photonic excitation into a charge separation. The eukaryotic PSI reaction center is composed of at least 11 subunits. Requires P700 is a chlorophyll a/chlorophyll a' dimer, A0 is one or more chlorophyll a, A1 is one or both phylloquinones and FX is a shared 4Fe-4S iron-sulfur center. as cofactor.

The protein localises to the plastid. It is found in the chloroplast thylakoid membrane. It carries out the reaction reduced [plastocyanin] + hnu + oxidized [2Fe-2S]-[ferredoxin] = oxidized [plastocyanin] + reduced [2Fe-2S]-[ferredoxin]. In terms of biological role, psaA and PsaB bind P700, the primary electron donor of photosystem I (PSI), as well as the electron acceptors A0, A1 and FX. PSI is a plastocyanin-ferredoxin oxidoreductase, converting photonic excitation into a charge separation, which transfers an electron from the donor P700 chlorophyll pair to the spectroscopically characterized acceptors A0, A1, FX, FA and FB in turn. Oxidized P700 is reduced on the lumenal side of the thylakoid membrane by plastocyanin. This chain is Photosystem I P700 chlorophyll a apoprotein A2, found in Cucumis sativus (Cucumber).